We begin with the raw amino-acid sequence, 228 residues long: Uracil-DNA glycosylase (228 aa).

Aspartate 71 serves as the catalytic Proton acceptor.

The protein belongs to the uracil-DNA glycosylase (UDG) superfamily. UNG family.

It is found in the cytoplasm. The enzyme catalyses Hydrolyzes single-stranded DNA or mismatched double-stranded DNA and polynucleotides, releasing free uracil.. In terms of biological role, excises uracil residues from the DNA which can arise as a result of misincorporation of dUMP residues by DNA polymerase or due to deamination of cytosine. This is Uracil-DNA glycosylase from Thermobifida fusca (strain YX).